We begin with the raw amino-acid sequence, 415 residues long: Gamma-glutamyl phosphate reductase (415 aa).

It belongs to the gamma-glutamyl phosphate reductase family.

Its subcellular location is the cytoplasm. The catalysed reaction is L-glutamate 5-semialdehyde + phosphate + NADP(+) = L-glutamyl 5-phosphate + NADPH + H(+). The protein operates within amino-acid biosynthesis; L-proline biosynthesis; L-glutamate 5-semialdehyde from L-glutamate: step 2/2. In terms of biological role, catalyzes the NADPH-dependent reduction of L-glutamate 5-phosphate into L-glutamate 5-semialdehyde and phosphate. The product spontaneously undergoes cyclization to form 1-pyrroline-5-carboxylate. The chain is Gamma-glutamyl phosphate reductase from Bacillus velezensis (strain DSM 23117 / BGSC 10A6 / LMG 26770 / FZB42) (Bacillus amyloliquefaciens subsp. plantarum).